An 893-amino-acid polypeptide reads, in one-letter code: Serine/threonine-protein kinase/endoribonuclease IRE1 (893 aa).

A signal peptide spans 1–19; it reads MRSLRRVLLQLVLLAGVAF. Residues 20 to 379 lie on the Lumenal side of the membrane; the sequence is RGVRFDDAAD…NSVTKFSYRW (360 aa). N-linked (GlcNAc...) asparagine glycans are attached at residues N105, N158, N259, and N351. The helical transmembrane segment at 380–397 threads the bilayer; it reads LFPTFLMLLIMACLVKLA. At 398–893 the chain is on the cytoplasmic side; sequence DASKYCRQFV…FSKYFLGSSA (496 aa). A disordered region spans residues 451 to 478; the sequence is ASDKEGNGTGGSTEAQSNKAHDSTNVEL. The Protein kinase domain maps to 491–759; that stretch reads CVYSKEIGKG…AVYVMHHPFF (269 aa). ATP contacts are provided by residues 497-505 and K519; that span reads IGKGSNGTV. D625 functions as the Proton acceptor in the catalytic mechanism. The 129-residue stretch at 762–890 folds into the KEN domain; the sequence is PELCLSFLRD…EEAFSKYFLG (129 aa).

The protein belongs to the protein kinase superfamily. Ser/Thr protein kinase family. In terms of assembly, homodimer; disulfide-linked. Dimer formation is driven by hydrophobic interactions within the N-terminal luminal domains and stabilized by disulfide bridges. In terms of processing, autophosphorylated. In terms of tissue distribution, expressed in roots, nodes, internodes, leaf sheaths, leaf blades, young ears and mature ears.

It is found in the endoplasmic reticulum membrane. It carries out the reaction L-seryl-[protein] + ATP = O-phospho-L-seryl-[protein] + ADP + H(+). It catalyses the reaction L-threonyl-[protein] + ATP = O-phospho-L-threonyl-[protein] + ADP + H(+). Involved in endoplasmic reticulum (ER) stress response. Senses unfolded proteins in the lumen of the ER via its N-terminal domain which leads to enzyme auto-activation. The active endoribonuclease domain splices bZIP50 mRNA to generate a new C-terminus, converting it into a potent unfolded-protein response (UPR) transcriptional activator, which then induces transcription of UPR target genes, such as luminal-binding protein (BiP) chaperones. The polypeptide is Serine/threonine-protein kinase/endoribonuclease IRE1 (Oryza sativa subsp. japonica (Rice)).